The chain runs to 231 residues: 5'-methylthioadenosine/S-adenosylhomocysteine nucleosidase (231 aa).

Residue Glu-12 is the Proton acceptor of the active site. Residues Gly-78, Met-153, and 174–175 each bind substrate; that span reads ME. The Proton donor role is filled by Asp-198.

It belongs to the PNP/UDP phosphorylase family. MtnN subfamily.

The catalysed reaction is S-adenosyl-L-homocysteine + H2O = S-(5-deoxy-D-ribos-5-yl)-L-homocysteine + adenine. It catalyses the reaction S-methyl-5'-thioadenosine + H2O = 5-(methylsulfanyl)-D-ribose + adenine. It carries out the reaction 5'-deoxyadenosine + H2O = 5-deoxy-D-ribose + adenine. It functions in the pathway amino-acid biosynthesis; L-methionine biosynthesis via salvage pathway; S-methyl-5-thio-alpha-D-ribose 1-phosphate from S-methyl-5'-thioadenosine (hydrolase route): step 1/2. Its function is as follows. Catalyzes the irreversible cleavage of the glycosidic bond in both 5'-methylthioadenosine (MTA) and S-adenosylhomocysteine (SAH/AdoHcy) to adenine and the corresponding thioribose, 5'-methylthioribose and S-ribosylhomocysteine, respectively. Also cleaves 5'-deoxyadenosine, a toxic by-product of radical S-adenosylmethionine (SAM) enzymes, into 5-deoxyribose and adenine. This Bacillus thuringiensis subsp. konkukian (strain 97-27) protein is 5'-methylthioadenosine/S-adenosylhomocysteine nucleosidase.